Consider the following 325-residue polypeptide: Reaction center protein M chain (325 aa).

3 consecutive transmembrane segments (helical) span residues 54–80, 111–140, and 143–168; these read LGPL…LASV, NDGG…RARA, and MGTH…RPVL. Residues H183 and H203 each coordinate (7R,8Z)-bacteriochlorophyll b. The helical transmembrane segment at 198-226 threads the bilayer; sequence FYNPFHALSIAFLYGATLLFAMHGATILA. The Fe cation site is built by H220 and E235. Residue W253 participates in a ubiquinone binding. Residues 260–286 form a helical membrane-spanning segment; sequence NATTESIHRWAWWFAVLCPLCGGIGIL. Position 267 (H267) interacts with Fe cation.

Belongs to the reaction center PufL/M/PsbA/D family. In terms of assembly, reaction center is composed of four bacteriochlorophylls, two bacteriopheophytins, two ubiquinones, one iron, and three highly hydrophobic polypeptide chains (designated L, M, and H).

The protein localises to the cell inner membrane. In terms of biological role, the reaction center is a membrane-bound complex that mediates the initial photochemical event in the electron transfer process of photosynthesis. This Rubrivivax gelatinosus (strain NBRC 100245 / IL144) protein is Reaction center protein M chain (pufM).